The chain runs to 352 residues: UDP-N-acetylglucosamine--N-acetylmuramyl-(pentapeptide) pyrophosphoryl-undecaprenol N-acetylglucosamine transferase (352 aa).

UDP-N-acetyl-alpha-D-glucosamine is bound by residues 14–16 (TGG), Asn124, Arg164, Ser185, and Gln285.

Belongs to the glycosyltransferase 28 family. MurG subfamily.

The protein resides in the cell inner membrane. The enzyme catalyses di-trans,octa-cis-undecaprenyl diphospho-N-acetyl-alpha-D-muramoyl-L-alanyl-D-glutamyl-meso-2,6-diaminopimeloyl-D-alanyl-D-alanine + UDP-N-acetyl-alpha-D-glucosamine = di-trans,octa-cis-undecaprenyl diphospho-[N-acetyl-alpha-D-glucosaminyl-(1-&gt;4)]-N-acetyl-alpha-D-muramoyl-L-alanyl-D-glutamyl-meso-2,6-diaminopimeloyl-D-alanyl-D-alanine + UDP + H(+). It participates in cell wall biogenesis; peptidoglycan biosynthesis. Its function is as follows. Cell wall formation. Catalyzes the transfer of a GlcNAc subunit on undecaprenyl-pyrophosphoryl-MurNAc-pentapeptide (lipid intermediate I) to form undecaprenyl-pyrophosphoryl-MurNAc-(pentapeptide)GlcNAc (lipid intermediate II). This chain is UDP-N-acetylglucosamine--N-acetylmuramyl-(pentapeptide) pyrophosphoryl-undecaprenol N-acetylglucosamine transferase, found in Chlamydia trachomatis serovar L2 (strain ATCC VR-902B / DSM 19102 / 434/Bu).